Here is a 357-residue protein sequence, read N- to C-terminus: Probable dual-specificity RNA methyltransferase RlmN (357 aa).

The active-site Proton acceptor is the glutamate 92. Positions 98-330 constitute a Radical SAM core domain; it reads QEYGLSVCVT…KKNGINCVIR (233 aa). Cysteine 105 and cysteine 341 form a disulfide bridge. [4Fe-4S] cluster contacts are provided by cysteine 112, cysteine 116, and cysteine 119. Residues 164-165, serine 196, 219-221, and asparagine 297 each bind S-adenosyl-L-methionine; these read GE and SLH. The active-site S-methylcysteine intermediate is cysteine 341.

The protein belongs to the radical SAM superfamily. RlmN family. Requires [4Fe-4S] cluster as cofactor.

It is found in the cytoplasm. It carries out the reaction adenosine(2503) in 23S rRNA + 2 reduced [2Fe-2S]-[ferredoxin] + 2 S-adenosyl-L-methionine = 2-methyladenosine(2503) in 23S rRNA + 5'-deoxyadenosine + L-methionine + 2 oxidized [2Fe-2S]-[ferredoxin] + S-adenosyl-L-homocysteine. The enzyme catalyses adenosine(37) in tRNA + 2 reduced [2Fe-2S]-[ferredoxin] + 2 S-adenosyl-L-methionine = 2-methyladenosine(37) in tRNA + 5'-deoxyadenosine + L-methionine + 2 oxidized [2Fe-2S]-[ferredoxin] + S-adenosyl-L-homocysteine. Specifically methylates position 2 of adenine 2503 in 23S rRNA and position 2 of adenine 37 in tRNAs. This is Probable dual-specificity RNA methyltransferase RlmN from Enterococcus faecalis (strain ATCC 700802 / V583).